A 384-amino-acid polypeptide reads, in one-letter code: S-adenosylmethionine synthase (384 aa).

H15 serves as a coordination point for ATP. D17 contributes to the Mg(2+) binding site. E43 serves as a coordination point for K(+). The L-methionine site is built by E56 and Q99. The flexible loop stretch occupies residues 99–109 (QSPDINQGVDR). ATP-binding positions include 164-166 (DAK), 230-231 (RF), D239, 245-246 (RK), A262, and K266. D239 contacts L-methionine. Residue K270 participates in L-methionine binding.

Belongs to the AdoMet synthase family. As to quaternary structure, homotetramer; dimer of dimers. Mg(2+) serves as cofactor. K(+) is required as a cofactor.

The protein resides in the cytoplasm. It catalyses the reaction L-methionine + ATP + H2O = S-adenosyl-L-methionine + phosphate + diphosphate. Its pathway is amino-acid biosynthesis; S-adenosyl-L-methionine biosynthesis; S-adenosyl-L-methionine from L-methionine: step 1/1. In terms of biological role, catalyzes the formation of S-adenosylmethionine (AdoMet) from methionine and ATP. The overall synthetic reaction is composed of two sequential steps, AdoMet formation and the subsequent tripolyphosphate hydrolysis which occurs prior to release of AdoMet from the enzyme. The protein is S-adenosylmethionine synthase of Shigella boydii serotype 18 (strain CDC 3083-94 / BS512).